A 327-amino-acid polypeptide reads, in one-letter code: MDLYPEENTQSEQSQNSENNMQIFKSENSDGFSSDLMISNDQLKNISKTQLTLEKEKIFKMPNVLSQVMKKAFSRKNEILYCVSTKELSVDIHDATGKVYLPLITREEINKRLSSLKPEVRKIMSMVHLGAVKILLKAQFRNGIDTPIKIALIDDRINSRRDCLLGAAKGNLAYGKFMFTVYPKFGISLNTQRLNQTLSLIHDFENKNLMNKGDKVMTITYIVGYALTNSHHSIDYQSNATIELEDVFQEIGNVQQSDFCTIQNDECNWAIDIAQNKALLGAKTQSQIGNSLQIGNSASSSNTENELARVSQNIDLLKNKLKEICGE.

Positions 297 to 327 (SASSSNTENELARVSQNIDLLKNKLKEICGE) form a coiled coil.

The protein belongs to the caulimoviridae movement protein family. As to quaternary structure, homotrimer, through the coiled-coil domain. Interacts with VAP. May interact (via N-terminus) with host prenylated Rab acceptor protein 1D (PRA1D).

The protein resides in the host cell junction. It is found in the host plasmodesma. Functionally, transports viral genome to neighboring plant cells directly through plasmosdesmata, without any budding. The movement protein allows efficient cell to cell propagation, by bypassing the host cell wall barrier. Acts by forming tubules structures that increase the size exclusion limit (SEL) of plasmodesmata, thereby allowing viral ribonucleocapsids to spread directly to neighboring cells. The polypeptide is Movement protein (Cauliflower mosaic virus (strain CM-1841) (CaMV)).